The following is a 247-amino-acid chain: ATP synthase subunit a, chloroplastic (247 aa).

5 helical membrane-spanning segments follow: residues 38 to 58 (QVLI…TIAV), 95 to 115 (VPFI…GALF), 134 to 154 (INTT…AGLT), 199 to 219 (LVVV…VMFL), and 220 to 240 (GLFT…AYIG).

The protein belongs to the ATPase A chain family. As to quaternary structure, F-type ATPases have 2 components, CF(1) - the catalytic core - and CF(0) - the membrane proton channel. CF(1) has five subunits: alpha(3), beta(3), gamma(1), delta(1), epsilon(1). CF(0) has four main subunits: a, b, b' and c.

It localises to the plastid. The protein localises to the chloroplast thylakoid membrane. Key component of the proton channel; it plays a direct role in the translocation of protons across the membrane. This chain is ATP synthase subunit a, chloroplastic, found in Piper cenocladum (Ant piper).